Reading from the N-terminus, the 512-residue chain is Cytochrome P450 monooxygenase astD (512 aa).

The chain crosses the membrane as a helical span at residues 19-39; the sequence is MGISILVMLSTFLALGTIFVY. N191 and N413 each carry an N-linked (GlcNAc...) asparagine glycan. Residue C449 coordinates heme.

Belongs to the cytochrome P450 family. The cofactor is heme.

Its subcellular location is the membrane. It participates in secondary metabolite biosynthesis; terpenoid biosynthesis. Functionally, cytochrome P450 monooxygenase; part of the gene cluster that mediates the biosynthesis of astellolides, drimane-type sesquiterpene esters that show antimicrobial, anti-inflammatory, and anti-tumor activities. The first step in astellolide biosynthesis is performed by the sesquiterpene cyclase astC that catalyzes the formation of drimanyl pyrophosphate from farnesyl pyrophosphate. Drimanyl pyrophosphate is then dephosphorylated by the sesquiterpene phosphatase astI to produce drimanyl monophosphate which is further dephosphorylated to drim-8-ene-11-ol by atsK. Drim-8-ene-11-ol is converted to confertifolin, probably by the cytochrome P450 monooxygenase astD and/or the dehydrogenase astE. The cytochrome P450 monooxygenases astB, astF and astJ then hydroxylate confertifolin at C6, C14, or C15 to form trihydroxy confertifolin. The nonribosomal peptide synthetase astA catalyzes ester bond formation between trihydroxy contifolin and benzoic acid (BA) or 4-hydroxy benzoic acid (4HBA), leading to the formation of dideacetyl astellolides A and B, respectively. Finally, the O-acetyltransferase astG converts dideacetyl astellolides A and B into deacetyl astellolides A and B. In Aspergillus oryzae (strain ATCC 42149 / RIB 40) (Yellow koji mold), this protein is Cytochrome P450 monooxygenase astD.